Consider the following 259-residue polypeptide: Global transcriptional regulator CodY (259 aa).

Residues methionine 1–leucine 155 form a GAF domain region. Residues alanine 203–arginine 222 constitute a DNA-binding region (H-T-H motif). Serine 215 carries the post-translational modification Phosphoserine.

It belongs to the CodY family.

It localises to the cytoplasm. Functionally, DNA-binding global transcriptional regulator which is involved in the adaptive response to starvation and acts by directly or indirectly controlling the expression of numerous genes in response to nutrient availability. During rapid exponential growth, CodY is highly active and represses genes whose products allow adaptation to nutrient depletion. The polypeptide is Global transcriptional regulator CodY (Bacillus cytotoxicus (strain DSM 22905 / CIP 110041 / 391-98 / NVH 391-98)).